Here is a 290-residue protein sequence, read N- to C-terminus: Ribosomal RNA small subunit methyltransferase A (290 aa).

The S-adenosyl-L-methionine site is built by asparagine 27, leucine 29, glycine 54, glutamate 75, aspartate 100, and asparagine 125.

Belongs to the class I-like SAM-binding methyltransferase superfamily. rRNA adenine N(6)-methyltransferase family. RsmA subfamily.

The protein resides in the cytoplasm. It carries out the reaction adenosine(1518)/adenosine(1519) in 16S rRNA + 4 S-adenosyl-L-methionine = N(6)-dimethyladenosine(1518)/N(6)-dimethyladenosine(1519) in 16S rRNA + 4 S-adenosyl-L-homocysteine + 4 H(+). Its function is as follows. Specifically dimethylates two adjacent adenosines (A1518 and A1519) in the loop of a conserved hairpin near the 3'-end of 16S rRNA in the 30S particle. May play a critical role in biogenesis of 30S subunits. The chain is Ribosomal RNA small subunit methyltransferase A from Streptococcus pyogenes serotype M18 (strain MGAS8232).